Reading from the N-terminus, the 159-residue chain is Cytochrome c nitrite reductase subunit NrfH (159 aa).

Residues 2 to 14 are Cytoplasmic-facing; that stretch reads SEEKSRNGPARLK. The chain crosses the membrane as a helical; Signal-anchor for type II membrane protein span at residues 15-33; sequence LVLGGATLGVVALATVAFG. At 34–159 the chain is on the periplasmic side; that stretch reads MKYTDQRPFC…PISTREVADE (126 aa). Heme is bound by residues C43, C46, M49, H61, and C66. N67 lines the a menaquinol pocket. Residues C69 and H70 each coordinate heme. Residues K82 and D89 each contribute to the a menaquinol site. Position 89 (D89) interacts with heme. The interval 99–100 is interaction with NrfA; it reads GD. Residues C116, C119, H120, C136, C139, H140, and H145 each contribute to the heme site. The tract at residues 123–158 is interaction with NrfA; it reads TNVEVASMEAKKYCTDCHRNVQHMRMKPISTREVAD.

This sequence belongs to the NapC/NirT/NrfH family. In terms of assembly, component of the NrfHA cytochrome c nitrite reductase complex composed of 4 NrfA catalytic subunits and 2 NrfH quinone-binding subunits. Interacts with NrfA homodimer. It depends on heme as a cofactor.

The protein resides in the cell inner membrane. Functionally, electron donor subunit of the cytochrome c nitrite reductase holocomplex NrfHA. Acquires electrons from the menaquinone pool and mediates their transfer to the catalytic subunit NrfA in an anaerobic respiratory process of nitrite. The other biological function of the NrfHA holocomplex is to detoxify nitrite. This function is essential for the survival of this organism as it enables it to overcome inhibition by nitrite, which is produced by other organisms living in the same environment. The chain is Cytochrome c nitrite reductase subunit NrfH from Nitratidesulfovibrio vulgaris (strain ATCC 29579 / DSM 644 / CCUG 34227 / NCIMB 8303 / VKM B-1760 / Hildenborough) (Desulfovibrio vulgaris).